The sequence spans 391 residues: MFPNGTAPSPTSSPSSSPGGCGEGVCSRGPGSGAADGMEEPGRNSSQNGTLSEGQGSAILISFIYSVVCLVGLCGNSMVIYVILRYAKMKTATNIYILNLAIADELLMLSVPFLVTSTLLRHWPFGALLCRLVLSVDAVNMFTSIYCLTVLSVDRYVAVVHPIKAARYRRPTVAKVVNLGVWVLSLLVILPIVVFSRTAANSDGTVACNMLMPEPAQRWLVGFVLYTFLMGFLLPVGAICLCYVLIIAKMRMVALKAGWQQRKRSERKITLMVMMVVMVFVICWMPFYVVQLVNVFAEQDDATVSQLSVILGYANSCANPILYGFLSDNFKRSFQRILCLSWMDNAAEEPVDYYATALKSRAYSVEDFQPENLESGGVFRNGTCASRISTL.

Residues 1–50 are disordered; it reads MFPNGTAPSPTSSPSSSPGGCGEGVCSRGPGSGAADGMEEPGRNSSQNGT. Residues 1–56 are Extracellular-facing; it reads MFPNGTAPSPTSSPSSSPGGCGEGVCSRGPGSGAADGMEEPGRNSSQNGTLSEGQG. Residue asparagine 4 is glycosylated (N-linked (GlcNAc...) asparagine). Residues 8–18 are compositionally biased toward low complexity; that stretch reads PSPTSSPSSSP. 2 N-linked (GlcNAc...) asparagine glycosylation sites follow: asparagine 44 and asparagine 48. Residues 57-84 traverse the membrane as a helical segment; it reads SAILISFIYSVVCLVGLCGNSMVIYVIL. Residues 85–94 lie on the Cytoplasmic side of the membrane; the sequence is RYAKMKTATN. Residues 95–120 form a helical membrane-spanning segment; that stretch reads IYILNLAIADELLMLSVPFLVTSTLL. The Extracellular segment spans residues 121 to 131; it reads RHWPFGALLCR. An intrachain disulfide couples cysteine 130 to cysteine 208. A helical membrane pass occupies residues 132–153; the sequence is LVLSVDAVNMFTSIYCLTVLSV. Topologically, residues 154–175 are cytoplasmic; it reads DRYVAVVHPIKAARYRRPTVAK. Residues 176-196 form a helical membrane-spanning segment; sequence VVNLGVWVLSLLVILPIVVFS. The Extracellular portion of the chain corresponds to 197–219; that stretch reads RTAANSDGTVACNMLMPEPAQRW. A helical membrane pass occupies residues 220 to 244; it reads LVGFVLYTFLMGFLLPVGAICLCYV. The Cytoplasmic segment spans residues 245–270; sequence LIIAKMRMVALKAGWQQRKRSERKIT. A helical membrane pass occupies residues 271–296; sequence LMVMMVVMVFVICWMPFYVVQLVNVF. Topologically, residues 297 to 303 are extracellular; that stretch reads AEQDDAT. Residues 304–327 traverse the membrane as a helical segment; the sequence is VSQLSVILGYANSCANPILYGFLS. At 328–391 the chain is on the cytoplasmic side; sequence DNFKRSFQRI…GTCASRISTL (64 aa). Cysteine 339 carries the S-palmitoyl cysteine lipid modification.

Belongs to the G-protein coupled receptor 1 family. In terms of tissue distribution, brain, pituitary, islet, jejunum, stomach, heart, spleen.

The protein localises to the cell membrane. Receptor for somatostatin with higher affinity for somatostatin-14 than -28. This receptor is coupled to phosphotyrosine phosphatase and Na(+)/H(+) exchanger via pertussis toxin insensitive G proteins. The chain is Somatostatin receptor type 1 (Sstr1) from Rattus norvegicus (Rat).